The following is a 493-amino-acid chain: Probable GTP-binding protein OBGM, mitochondrial (493 aa).

A mitochondrion-targeting transit peptide spans 1–28 (MWLIRAIVPVRYLGSYKRPQKPPWMRNP). In terms of domain architecture, Obg spans 48–303 (TRMRDRFTLY…AVLILELKSI (256 aa)). Disordered stretches follow at residues 65-89 (SGCSSVRRSRADRYGKPDGGNGGRG) and 146-215 (GEIP…EDDD). A compositionally biased stretch (acidic residues) spans 187–196 (SESDQDDTEQ). One can recognise an OBG-type G domain in the interval 304–476 (ADVGLVGMPN…LKDGLKMLVD (173 aa)). GTP-binding positions include 310–317 (GMPNAGKS) and 356–360 (DIPGL).

This sequence belongs to the TRAFAC class OBG-HflX-like GTPase superfamily. OBG GTPase family.

It is found in the mitochondrion. In terms of biological role, may bind GTP and have GTPase activity. This is Probable GTP-binding protein OBGM, mitochondrial (ATOBGM) from Arabidopsis thaliana (Mouse-ear cress).